Here is a 454-residue protein sequence, read N- to C-terminus: Chromosomal replication initiator protein DnaA (454 aa).

The tract at residues methionine 1–tyrosine 79 is domain I, interacts with DnaA modulators. The interval tyrosine 79 to serine 117 is domain II. Residues asparagine 118–serine 334 are domain III, AAA+ region. 4 residues coordinate ATP: glycine 162, glycine 164, lysine 165, and threonine 166. The tract at residues arginine 335 to lysine 454 is domain IV, binds dsDNA.

Belongs to the DnaA family. Oligomerizes as a right-handed, spiral filament on DNA at oriC.

Its subcellular location is the cytoplasm. Plays an essential role in the initiation and regulation of chromosomal replication. ATP-DnaA binds to the origin of replication (oriC) to initiate formation of the DNA replication initiation complex once per cell cycle. Binds the DnaA box (a 9 base pair repeat at the origin) and separates the double-stranded (ds)DNA. Forms a right-handed helical filament on oriC DNA; dsDNA binds to the exterior of the filament while single-stranded (ss)DNA is stabiized in the filament's interior. The ATP-DnaA-oriC complex binds and stabilizes one strand of the AT-rich DNA unwinding element (DUE), permitting loading of DNA polymerase. After initiation quickly degrades to an ADP-DnaA complex that is not apt for DNA replication. Binds acidic phospholipids. The sequence is that of Chromosomal replication initiator protein DnaA from Buchnera aphidicola subsp. Acyrthosiphon pisum (strain 5A).